Consider the following 475-residue polypeptide: MGEAPSPAPALWDWDYLDRCFARHRVCISFGLWICASSCWIAAHALLLYLRCAQKPRQDQSALCAACCLLTSLCDTVGALLARQLTIQVFTGAYLAAIDLVNFMFILFPVCGSKFKSNSDREARERKRRRQLRASVFALALPLSLGPCWALWVAVPKASATIRGPQRRLLASLLQENTEILGYLLGSVAAFGSWASRIPPLSRIAPPPTLGITTQHEIWRGQMSKPSQSPSRSPSGHWRAAAQRQVLGTEMCRGKTFPSIHLWTRLLSALAGLLYASAIVAHDQHPEYLLRATPWFLTSLGRAALDLAIIFLSCVMKSKMRQALGFAKEARESPDTQALLTCAEKEEENQENLDWVPLTTLSHCKSLRTMTAISRYMELTIEPVQQAGCSATRLPGDGQTSAGDASLQDPPSYPPVQVIRARVSSGSSSEVSSINSDLEWDPEDVNLEGSKENVELLGSQVHQDSVRTAHLSDDD.

Residues 1–29 lie on the Extracellular side of the membrane; sequence MGEAPSPAPALWDWDYLDRCFARHRVCIS. A helical membrane pass occupies residues 30–50; it reads FGLWICASSCWIAAHALLLYL. Residues 51 to 61 lie on the Cytoplasmic side of the membrane; it reads RCAQKPRQDQS. The chain crosses the membrane as a helical span at residues 62-82; sequence ALCAACCLLTSLCDTVGALLA. The Extracellular portion of the chain corresponds to 83-88; it reads RQLTIQ. Residues 89 to 109 form a helical membrane-spanning segment; the sequence is VFTGAYLAAIDLVNFMFILFP. Topologically, residues 110-135 are cytoplasmic; sequence VCGSKFKSNSDREARERKRRRQLRAS. Residues 136–156 form a helical membrane-spanning segment; sequence VFALALPLSLGPCWALWVAVP. Over 157 to 179 the chain is Extracellular; that stretch reads KASATIRGPQRRLLASLLQENTE. Residues 180–200 traverse the membrane as a helical segment; the sequence is ILGYLLGSVAAFGSWASRIPP. The Cytoplasmic portion of the chain corresponds to 201–259; that stretch reads LSRIAPPPTLGITTQHEIWRGQMSKPSQSPSRSPSGHWRAAAQRQVLGTEMCRGKTFPS. A helical membrane pass occupies residues 260–280; sequence IHLWTRLLSALAGLLYASAIV. Topologically, residues 281–294 are extracellular; it reads AHDQHPEYLLRATP. Residues 295-315 traverse the membrane as a helical segment; that stretch reads WFLTSLGRAALDLAIIFLSCV. At 316 to 475 the chain is on the cytoplasmic side; it reads MKSKMRQALG…VRTAHLSDDD (160 aa). The interval 390-475 is disordered; it reads SATRLPGDGQ…VRTAHLSDDD (86 aa). The span at 424–436 shows a compositional bias: low complexity; sequence SSGSSSEVSSINS. The span at 464 to 475 shows a compositional bias: basic and acidic residues; the sequence is DSVRTAHLSDDD. S465 carries the phosphoserine modification.

It localises to the membrane. The polypeptide is Transmembrane protein 44 (TMEM44) (Homo sapiens (Human)).